The following is a 298-amino-acid chain: ADP/ATP translocase 3 (298 aa).

Position 1 is an N-acetylmethionine (M1). Residues 1–7 (MTEQAIS) lie on the Mitochondrial intermembrane side of the membrane. T2 carries the N-acetylthreonine; in ADP/ATP translocase 3, N-terminally processed modification. Residues 6–98 (ISFAKDFLAG…FAFKDKYKQI (93 aa)) form a Solcar 1 repeat. Residues 8–37 (FAKDFLAGGIAAAISKTAVAPIERVKLLLQ) traverse the membrane as a helical segment. Residues 38-74 (VQHASKQIAADKQYKGIVDCIVRIPKEQGVLSFWRGN) are Mitochondrial matrix-facing. Position 52 is an N6,N6,N6-trimethyllysine (K52). Residues 75–99 (LANVIRYFPTQALNFAFKDKYKQIF) traverse the membrane as a helical segment. ADP contacts are provided by R80 and K92. Over 100-109 (LGGVDKHTQF) the chain is Mitochondrial intermembrane. Residue K105 is modified to N6-acetyllysine. A helical transmembrane segment spans residues 110-130 (WRYFAGNLASGGAAGATSLCF). Solcar repeat units lie at residues 111–201 (RYFA…AKGM) and 212–297 (VSWM…LKKV). The Mitochondrial matrix segment spans residues 131–178 (VYPLDFARTRLAADVGKSGTEREFRGLGDCLVKITKSDGIRGLYQGFS). A helical transmembrane segment spans residues 179–199 (VSVQGIIIYRAAYFGVYDTAK). At 200-210 (GMLPDPKNTHI) the chain is on the mitochondrial intermembrane side. Residues 211–231 (VVSWMIAQTVTAVAGVVSYPF) traverse the membrane as a helical segment. Residues 232–273 (DTVRRRMMMQSGRKGADIMYTGTVDCWRKIFRDEGGKAFFKG) are Mitochondrial matrix-facing. R235 is a binding site for ADP. The important for transport activity stretch occupies residues 235-240 (RRRMMM). The short motif at 235-240 (RRRMMM) is the Nucleotide carrier signature motif element. K268 carries the N6-acetyllysine modification. Residues 274–291 (AWSNVLRGMGGAFVLVLY) traverse the membrane as a helical segment. At 292–298 (DELKKVI) the chain is on the mitochondrial intermembrane side.

Belongs to the mitochondrial carrier (TC 2.A.29) family. As to quaternary structure, monomer. Found in a complex with ARL2, ARL2BP and SLC25A6/ANT3. (Microbial infection) Interacts with influenza A virus PB1-F2 protein. In terms of assembly, (Microbial infection) Interacts with HIV-1 Vpr. Trimethylated by ANTKMT at Lys-52. Expressed in erythrocytes (at protein level).

Its subcellular location is the mitochondrion inner membrane. It localises to the membrane. It catalyses the reaction ADP(in) + ATP(out) = ADP(out) + ATP(in). It carries out the reaction H(+)(in) = H(+)(out). With respect to regulation, the matrix-open state (m-state) is inhibited by the membrane-permeable bongkrekic acid (BKA). The cytoplasmic-open state (c-state) is inhibited by the membrane-impermeable toxic inhibitor carboxyatractyloside (CATR). Proton transporter activity is inhibited by ADP:ATP antiporter activity. ADP:ATP antiporter that mediates import of ADP into the mitochondrial matrix for ATP synthesis, and export of ATP out to fuel the cell. Cycles between the cytoplasmic-open state (c-state) and the matrix-open state (m-state): operates by the alternating access mechanism with a single substrate-binding site intermittently exposed to either the cytosolic (c-state) or matrix (m-state) side of the inner mitochondrial membrane. In addition to its ADP:ATP antiporter activity, also involved in mitochondrial uncoupling and mitochondrial permeability transition pore (mPTP) activity. Plays a role in mitochondrial uncoupling by acting as a proton transporter: proton transport uncouples the proton flows via the electron transport chain and ATP synthase to reduce the efficiency of ATP production and cause mitochondrial thermogenesis. Proton transporter activity is inhibited by ADP:ATP antiporter activity, suggesting that SLC25A6/ANT3 acts as a master regulator of mitochondrial energy output by maintaining a delicate balance between ATP production (ADP:ATP antiporter activity) and thermogenesis (proton transporter activity). Proton transporter activity requires free fatty acids as cofactor, but does not transport it. Also plays a key role in mPTP opening, a non-specific pore that enables free passage of the mitochondrial membranes to solutes of up to 1.5 kDa, and which contributes to cell death. It is however unclear if SLC25A6/ANT3 constitutes a pore-forming component of mPTP or regulates it. The sequence is that of ADP/ATP translocase 3 from Homo sapiens (Human).